A 128-amino-acid polypeptide reads, in one-letter code: Fluoride-specific ion channel FluC (128 aa).

4 helical membrane-spanning segments follow: residues 5–25 (IVAI…LALA), 35–55 (LGTL…AVVF), 67–87 (LFVI…SVEV), and 96–116 (FGWA…LTAL). Residues Gly-75 and Thr-78 each contribute to the Na(+) site.

This sequence belongs to the fluoride channel Fluc/FEX (TC 1.A.43) family.

Its subcellular location is the cell inner membrane. The catalysed reaction is fluoride(in) = fluoride(out). With respect to regulation, na(+) is not transported, but it plays an essential structural role and its presence is essential for fluoride channel function. Its function is as follows. Fluoride-specific ion channel. Important for reducing fluoride concentration in the cell, thus reducing its toxicity. This Burkholderia ambifaria (strain MC40-6) protein is Fluoride-specific ion channel FluC.